The sequence spans 519 residues: Asteroid homolog 1 (519 aa).

It belongs to the asteroid family.

It is found in the cytoplasm. The protein localises to the mitochondrion. The sequence is that of Asteroid homolog 1 (ast1) from Schizosaccharomyces pombe (strain 972 / ATCC 24843) (Fission yeast).